The sequence spans 212 residues: Pyridoxine/pyridoxamine 5'-phosphate oxidase (212 aa).

Substrate contacts are provided by residues 8-11 (RREY) and Lys66. Residues 61–66 (RIVLLK), 76–77 (FT), Arg82, Lys83, and Gln105 contribute to the FMN site. 3 residues coordinate substrate: Tyr123, Arg127, and Ser131. Residues 140-141 (QS) and Trp185 contribute to the FMN site. A substrate-binding site is contributed by 191–193 (RLH). Arg195 is an FMN binding site.

This sequence belongs to the pyridoxamine 5'-phosphate oxidase family. As to quaternary structure, homodimer. It depends on FMN as a cofactor.

The catalysed reaction is pyridoxamine 5'-phosphate + O2 + H2O = pyridoxal 5'-phosphate + H2O2 + NH4(+). It catalyses the reaction pyridoxine 5'-phosphate + O2 = pyridoxal 5'-phosphate + H2O2. It participates in cofactor metabolism; pyridoxal 5'-phosphate salvage; pyridoxal 5'-phosphate from pyridoxamine 5'-phosphate: step 1/1. It functions in the pathway cofactor metabolism; pyridoxal 5'-phosphate salvage; pyridoxal 5'-phosphate from pyridoxine 5'-phosphate: step 1/1. In terms of biological role, catalyzes the oxidation of either pyridoxine 5'-phosphate (PNP) or pyridoxamine 5'-phosphate (PMP) into pyridoxal 5'-phosphate (PLP). The polypeptide is Pyridoxine/pyridoxamine 5'-phosphate oxidase (Shewanella halifaxensis (strain HAW-EB4)).